Reading from the N-terminus, the 120-residue chain is Large ribosomal subunit protein uL18 (120 aa).

The protein belongs to the universal ribosomal protein uL18 family. In terms of assembly, part of the 50S ribosomal subunit; part of the 5S rRNA/L5/L18/L25 subcomplex. Contacts the 5S and 23S rRNAs.

In terms of biological role, this is one of the proteins that bind and probably mediate the attachment of the 5S RNA into the large ribosomal subunit, where it forms part of the central protuberance. The sequence is that of Large ribosomal subunit protein uL18 from Bartonella henselae (strain ATCC 49882 / DSM 28221 / CCUG 30454 / Houston 1) (Rochalimaea henselae).